Consider the following 61-residue polypeptide: Probable tautomerase LMOf2365_2536 (61 aa).

Proline 2 serves as the catalytic Proton acceptor; via imino nitrogen.

Belongs to the 4-oxalocrotonate tautomerase family.

This Listeria monocytogenes serotype 4b (strain F2365) protein is Probable tautomerase LMOf2365_2536.